The sequence spans 258 residues: Coiled-coil domain-containing protein 107 (258 aa).

The first 24 residues, 1–24, serve as a signal peptide directing secretion; that stretch reads MASVVSLAGTLGLLLVSALPEVLG. A compositionally biased stretch (basic and acidic residues) spans 25 to 35; that stretch reads DRRSPDRRAHP. The tract at residues 25 to 63 is disordered; sequence DRRSPDRRAHPGDAGQVGPAAAEPRRQSPPSKNQRERAR. A helical transmembrane segment spans residues 66–86; it reads ALPLGALYTAAAVAFVLYKCL. Residues 106 to 134 adopt a coiled-coil conformation; the sequence is LQSEQHLAQLTQQLVQTEQHLNSLMAQLD. Residues 203–222 are disordered; it reads EPLNWNTGTRNLTPPREMQP.

Its subcellular location is the membrane. This Bos taurus (Bovine) protein is Coiled-coil domain-containing protein 107 (CCDC107).